Reading from the N-terminus, the 158-residue chain is Transcription elongation factor GreA (158 aa).

The protein belongs to the GreA/GreB family.

Its function is as follows. Necessary for efficient RNA polymerase transcription elongation past template-encoded arresting sites. The arresting sites in DNA have the property of trapping a certain fraction of elongating RNA polymerases that pass through, resulting in locked ternary complexes. Cleavage of the nascent transcript by cleavage factors such as GreA or GreB allows the resumption of elongation from the new 3'terminus. GreA releases sequences of 2 to 3 nucleotides. This Verminephrobacter eiseniae (strain EF01-2) protein is Transcription elongation factor GreA.